The primary structure comprises 800 residues: Phenylalanine--tRNA ligase beta subunit (800 aa).

One can recognise a tRNA-binding domain in the interval 39–154 (TKDIKNLVVG…ESQVPGTDAL (116 aa)). The region spanning 408 to 483 (AFITPIDITA…RIYGYDDIPS (76 aa)) is the B5 domain. The Mg(2+) site is built by Asp-461, Asp-467, Glu-470, and Glu-471. An FDX-ACB domain is found at 708 to 800 (PRFPGMSRDI…ALIEQGAVIR (93 aa)).

The protein belongs to the phenylalanyl-tRNA synthetase beta subunit family. Type 1 subfamily. Tetramer of two alpha and two beta subunits. Requires Mg(2+) as cofactor.

It localises to the cytoplasm. It carries out the reaction tRNA(Phe) + L-phenylalanine + ATP = L-phenylalanyl-tRNA(Phe) + AMP + diphosphate + H(+). This Staphylococcus aureus (strain MSSA476) protein is Phenylalanine--tRNA ligase beta subunit.